The primary structure comprises 345 residues: Hemin transport protein HmuS (345 aa).

This sequence to Y.enterocolitica HemS.

In terms of biological role, part of the binding-protein-dependent transport system for hemin. In Yersinia pestis, this protein is Hemin transport protein HmuS (hmuS).